The sequence spans 321 residues: Aspartate carbamoyltransferase catalytic subunit (321 aa).

The carbamoyl phosphate site is built by arginine 57 and threonine 58. Lysine 85 provides a ligand contact to L-aspartate. Carbamoyl phosphate contacts are provided by arginine 107, histidine 142, and glutamine 145. The L-aspartate site is built by arginine 175 and arginine 229. Carbamoyl phosphate-binding residues include glycine 270 and proline 271.

Belongs to the aspartate/ornithine carbamoyltransferase superfamily. ATCase family. In terms of assembly, heterododecamer (2C3:3R2) of six catalytic PyrB chains organized as two trimers (C3), and six regulatory PyrI chains organized as three dimers (R2).

The catalysed reaction is carbamoyl phosphate + L-aspartate = N-carbamoyl-L-aspartate + phosphate + H(+). It participates in pyrimidine metabolism; UMP biosynthesis via de novo pathway; (S)-dihydroorotate from bicarbonate: step 2/3. Functionally, catalyzes the condensation of carbamoyl phosphate and aspartate to form carbamoyl aspartate and inorganic phosphate, the committed step in the de novo pyrimidine nucleotide biosynthesis pathway. The chain is Aspartate carbamoyltransferase catalytic subunit from Mycobacterium leprae (strain TN).